The chain runs to 425 residues: GTPase Obg (425 aa).

One can recognise an Obg domain in the interval 1–158; the sequence is MFVDQVKVYV…RYIVMELKLI (158 aa). Residues 118–144 form a disordered region; sequence KGGRGGRGNNRFANSSNPAPHISENGE. In terms of domain architecture, OBG-type G spans 159–327; it reads ADVGLVGYPS…LMYAIGDTLA (169 aa). ATP is bound by residues 165–172, 190–194, 211–214, 281–284, and 308–310; these read GYPSVGKS, FTTLT, DLPG, NKME, and SAA. Residues Ser172 and Thr192 each coordinate Mg(2+). In terms of domain architecture, OCT spans 348 to 425; it reads RAEKEPDAFE…IGKLEFDFVE (78 aa).

The protein belongs to the TRAFAC class OBG-HflX-like GTPase superfamily. OBG GTPase family. As to quaternary structure, monomer. It depends on Mg(2+) as a cofactor.

It localises to the cytoplasm. Functionally, an essential GTPase which binds GTP, GDP and possibly (p)ppGpp with moderate affinity, with high nucleotide exchange rates and a fairly low GTP hydrolysis rate. Plays a role in control of the cell cycle, stress response, ribosome biogenesis and in those bacteria that undergo differentiation, in morphogenesis control. The sequence is that of GTPase Obg from Brevibacillus brevis (strain 47 / JCM 6285 / NBRC 100599).